Here is a 225-residue protein sequence, read N- to C-terminus: Endonuclease V (225 aa).

Positions 43 and 110 each coordinate Mg(2+).

This sequence belongs to the endonuclease V family. Mg(2+) serves as cofactor.

It is found in the cytoplasm. The enzyme catalyses Endonucleolytic cleavage at apurinic or apyrimidinic sites to products with a 5'-phosphate.. Functionally, DNA repair enzyme involved in the repair of deaminated bases. Selectively cleaves double-stranded DNA at the second phosphodiester bond 3' to a deoxyinosine leaving behind the intact lesion on the nicked DNA. In Thermotoga neapolitana (strain ATCC 49049 / DSM 4359 / NBRC 107923 / NS-E), this protein is Endonuclease V.